The primary structure comprises 140 residues: ATP synthase epsilon chain (140 aa).

The protein belongs to the ATPase epsilon chain family. In terms of assembly, F-type ATPases have 2 components, CF(1) - the catalytic core - and CF(0) - the membrane proton channel. CF(1) has five subunits: alpha(3), beta(3), gamma(1), delta(1), epsilon(1). CF(0) has three main subunits: a, b and c.

Its subcellular location is the cell inner membrane. Functionally, produces ATP from ADP in the presence of a proton gradient across the membrane. This Bdellovibrio bacteriovorus (strain ATCC 15356 / DSM 50701 / NCIMB 9529 / HD100) protein is ATP synthase epsilon chain.